Consider the following 293-residue polypeptide: Pantothenate synthetase (293 aa).

Position 30 to 37 (30 to 37 (MGYLHKGH)) interacts with ATP. His-37 acts as the Proton donor in catalysis. Residue Gln-61 coordinates (R)-pantoate. Gln-61 is a beta-alanine binding site. 147–150 (GEKD) lines the ATP pocket. Residue Gln-153 coordinates (R)-pantoate. Residues Val-176 and 184 to 187 (CSSR) contribute to the ATP site.

This sequence belongs to the pantothenate synthetase family. Homodimer.

It localises to the cytoplasm. It carries out the reaction (R)-pantoate + beta-alanine + ATP = (R)-pantothenate + AMP + diphosphate + H(+). Its pathway is cofactor biosynthesis; (R)-pantothenate biosynthesis; (R)-pantothenate from (R)-pantoate and beta-alanine: step 1/1. Functionally, catalyzes the condensation of pantoate with beta-alanine in an ATP-dependent reaction via a pantoyl-adenylate intermediate. This is Pantothenate synthetase from Brucella abortus (strain S19).